The chain runs to 519 residues: Mannosyl-oligosaccharide alpha-1,2-mannosidase (519 aa).

An N-terminal signal peptide occupies residues 1 to 22; that stretch reads MKGSPVLAVCAAALTLIPSVVA. N-linked (GlcNAc...) asparagine glycosylation occurs at Asn187. A disulfide bridge links Cys337 with Cys366. Glu380 (proton donor) is an active-site residue. Asn443 carries an N-linked (GlcNAc...) asparagine glycan. Thr507 lines the Ca(2+) pocket.

The protein belongs to the glycosyl hydrolase 47 family. Monomer. Ca(2+) serves as cofactor. Requires Mg(2+) as cofactor.

Its subcellular location is the secreted. It carries out the reaction N(4)-(alpha-D-Man-(1-&gt;2)-alpha-D-Man-(1-&gt;2)-alpha-D-Man-(1-&gt;3)-[alpha-D-Man-(1-&gt;2)-alpha-D-Man-(1-&gt;3)-[alpha-D-Man-(1-&gt;2)-alpha-D-Man-(1-&gt;6)]-alpha-D-Man-(1-&gt;6)]-beta-D-Man-(1-&gt;4)-beta-D-GlcNAc-(1-&gt;4)-beta-D-GlcNAc)-L-asparaginyl-[protein] (N-glucan mannose isomer 9A1,2,3B1,2,3) + 4 H2O = N(4)-(alpha-D-Man-(1-&gt;3)-[alpha-D-Man-(1-&gt;3)-[alpha-D-Man-(1-&gt;6)]-alpha-D-Man-(1-&gt;6)]-beta-D-Man-(1-&gt;4)-beta-D-GlcNAc-(1-&gt;4)-beta-D-GlcNAc)-L-asparaginyl-[protein] (N-glucan mannose isomer 5A1,2) + 4 beta-D-mannose. The catalysed reaction is N(4)-(alpha-D-Man-(1-&gt;2)-alpha-D-Man-(1-&gt;2)-alpha-D-Man-(1-&gt;3)-[alpha-D-Man-(1-&gt;3)-[alpha-D-Man-(1-&gt;2)-alpha-D-Man-(1-&gt;6)]-alpha-D-Man-(1-&gt;6)]-beta-D-Man-(1-&gt;4)-beta-D-GlcNAc-(1-&gt;4)-beta-D-GlcNAc)-L-asparaginyl-[protein] (N-glucan mannose isomer 8A1,2,3B1,3) + 3 H2O = N(4)-(alpha-D-Man-(1-&gt;3)-[alpha-D-Man-(1-&gt;3)-[alpha-D-Man-(1-&gt;6)]-alpha-D-Man-(1-&gt;6)]-beta-D-Man-(1-&gt;4)-beta-D-GlcNAc-(1-&gt;4)-beta-D-GlcNAc)-L-asparaginyl-[protein] (N-glucan mannose isomer 5A1,2) + 3 beta-D-mannose. It functions in the pathway protein modification; protein glycosylation. Functionally, alpha-mannosidase involved in the maturation of Asn-linked oligosaccharides. Progressively trims alpha-1,2-linked mannose residues from Man(9)GlcNAc(2) to produce Man(5)GlcNAc(2). This is Mannosyl-oligosaccharide alpha-1,2-mannosidase from Coccidioides posadasii (strain RMSCC 757 / Silveira) (Valley fever fungus).